Reading from the N-terminus, the 64-residue chain is Large ribosomal subunit protein bL35 (64 aa).

Basic residues predominate over residues 1–22; the sequence is MPKMKSHTGMGKRVRVTGKGKI. A disordered region spans residues 1–28; the sequence is MPKMKSHTGMGKRVRVTGKGKIVKQQAG.

This sequence belongs to the bacterial ribosomal protein bL35 family.

This Salinispora tropica (strain ATCC BAA-916 / DSM 44818 / JCM 13857 / NBRC 105044 / CNB-440) protein is Large ribosomal subunit protein bL35.